A 183-amino-acid polypeptide reads, in one-letter code: MGMLDGLTNMFKMHDDDDFDDDYEDYDDDFDEDYEDDKPSARKRLFTGSSKKDSVADEEVSYTAEKPRFASKSKVVPMKTQSARGLEVVVIRPESMEDAKEITDTLLTGKAVVLNLEGIHVEIAQRIIDYSAGSTYAIRGNLQKITNYIFLVTPPNVDISGDIPEIVTGGIDLSSFNKNENRF.

Residues 13 to 58 (MHDDDDFDDDYEDYDDDFDEDYEDDKPSARKRLFTGSSKKDSVADE) are disordered. Residues 16 to 36 (DDDFDDDYEDYDDDFDEDYED) show a composition bias toward acidic residues.

The protein belongs to the SepF family. As to quaternary structure, homodimer. Interacts with FtsZ.

It is found in the cytoplasm. Its function is as follows. Cell division protein that is part of the divisome complex and is recruited early to the Z-ring. Probably stimulates Z-ring formation, perhaps through the cross-linking of FtsZ protofilaments. Its function overlaps with FtsA. The chain is Cell division protein SepF from Lachnospira eligens (strain ATCC 27750 / DSM 3376 / VPI C15-48 / C15-B4) (Eubacterium eligens).